The sequence spans 425 residues: Serine--tRNA ligase (425 aa).

Residue 230-232 (TSE) coordinates L-serine. 261–263 (RKE) contributes to the ATP binding site. Glutamate 284 is a binding site for L-serine. 348-351 (EISS) contacts ATP. Serine 385 provides a ligand contact to L-serine.

It belongs to the class-II aminoacyl-tRNA synthetase family. Type-1 seryl-tRNA synthetase subfamily. Homodimer. The tRNA molecule binds across the dimer.

It is found in the cytoplasm. The catalysed reaction is tRNA(Ser) + L-serine + ATP = L-seryl-tRNA(Ser) + AMP + diphosphate + H(+). It carries out the reaction tRNA(Sec) + L-serine + ATP = L-seryl-tRNA(Sec) + AMP + diphosphate + H(+). Its pathway is aminoacyl-tRNA biosynthesis; selenocysteinyl-tRNA(Sec) biosynthesis; L-seryl-tRNA(Sec) from L-serine and tRNA(Sec): step 1/1. In terms of biological role, catalyzes the attachment of serine to tRNA(Ser). Is also able to aminoacylate tRNA(Sec) with serine, to form the misacylated tRNA L-seryl-tRNA(Sec), which will be further converted into selenocysteinyl-tRNA(Sec). The sequence is that of Serine--tRNA ligase from Wolbachia pipientis wMel.